A 502-amino-acid polypeptide reads, in one-letter code: MSQKKIIIIGGGLGGISAAIRLAQSGFDVSLYDKNNHIGGKVNRLETEGFGFDLGPSILTMPYIFENLFNYSDKQMKDYVTIERLPLQWRSFFTNGEVIDLYEDLSQMLNANTYLTNDDIQQLHQFLNYAEKIHRFTEKGYFALGLDKVSEIIKYQGLLRSLKGVDYFSTMQQAINRYIEKQKLRDMLGYFIKYVGSSSYDAPAVLTLLIHMQYEQGLWYVKGGIHKLAQALEQLAIEEGVAIHTGMDVCSIDTYFNHITGVRLDDGSHVSADYIVSNREVIPTYRDLLHFSNKKIAQLEKVYEPAASGYVMHLGVDKEYAQLAHHNFLFSNDSKRNYREVFHDKVLPQDPTIYLVNSNKSDPTQAPEGHENLKVLPHIPYIQNQPFTEEQYSDFRERVLDKLEKMGLTDLRQHIIYEDIWTPHDIERTYGSNKGAIYGVVADKKKNKGFKFPKQSEYFDNLFFVGGSVNPGGGMPMVTLSGQQVADKINALECKVTTDSRE.

FAD is bound at residue 8–20 (IIGGGLGGISAAI).

This sequence belongs to the carotenoid/retinoid oxidoreductase family. CrtP subfamily. Requires FAD as cofactor.

It catalyses the reaction all-trans-4,4'-diaponeurosporene + 2 AH2 + 2 O2 = 4,4'-diaponeurosporenal + 2 A + 3 H2O. Its pathway is carotenoid biosynthesis; staphyloxanthin biosynthesis; staphyloxanthin from farnesyl diphosphate: step 3/5. Functionally, involved in the biosynthesis of the yellow-orange carotenoid staphyloxanthin, which plays a role in the virulence via its protective function against oxidative stress. Catalyzes the oxidation of the terminal methyl side group of 4,4'-diaponeurosporene to form 4,4'-diaponeurosporen-4-al. This chain is 4,4'-diaponeurosporene oxygenase, found in Staphylococcus haemolyticus (strain JCSC1435).